A 361-amino-acid chain; its full sequence is Probable mannose-1-phosphate guanylyltransferase 3 (361 aa).

Residues Leu6 and Val7 each contribute to the GDP-alpha-D-mannose site. Gly9, Gly11, Thr12, Arg13, and Lys23 together coordinate diphosphate. Residues Gly85, Asn109, Asp111, Gly146, and Asn173 each coordinate GDP-alpha-D-mannose.

It belongs to the transferase hexapeptide repeat family.

The catalysed reaction is alpha-D-mannose 1-phosphate + GTP + H(+) = GDP-alpha-D-mannose + diphosphate. Its pathway is nucleotide-sugar biosynthesis; GDP-alpha-D-mannose biosynthesis; GDP-alpha-D-mannose from alpha-D-mannose 1-phosphate (GTP route): step 1/1. Functionally, catalyzes a reaction of the Smirnoff-Wheeler pathway, the major route to ascorbate biosynthesis in plants. In Oryza sativa subsp. japonica (Rice), this protein is Probable mannose-1-phosphate guanylyltransferase 3.